The sequence spans 117 residues: Hemerythrin subunit alpha (117 aa).

Residues H24, H53, E57, H72, H76, H105, and D110 each coordinate Fe cation.

It belongs to the hemerythrin family. As to quaternary structure, octamer composed of two types of chains: alpha and beta.

Its function is as follows. Hemerythrin is a respiratory protein in blood cells of certain marine worms. The oxygen-binding site in each chain contains two iron atoms. This Lingula anatina (Brachiopod) protein is Hemerythrin subunit alpha.